The sequence spans 204 residues: 3-isopropylmalate dehydratase small subunit (204 aa).

It belongs to the LeuD family. LeuD type 1 subfamily. As to quaternary structure, heterodimer of LeuC and LeuD.

It carries out the reaction (2R,3S)-3-isopropylmalate = (2S)-2-isopropylmalate. Its pathway is amino-acid biosynthesis; L-leucine biosynthesis; L-leucine from 3-methyl-2-oxobutanoate: step 2/4. Its function is as follows. Catalyzes the isomerization between 2-isopropylmalate and 3-isopropylmalate, via the formation of 2-isopropylmaleate. In Ruthia magnifica subsp. Calyptogena magnifica, this protein is 3-isopropylmalate dehydratase small subunit.